The chain runs to 431 residues: Glutamate-1-semialdehyde 2,1-aminomutase (431 aa).

Lys-269 carries the N6-(pyridoxal phosphate)lysine modification.

Belongs to the class-III pyridoxal-phosphate-dependent aminotransferase family. HemL subfamily. In terms of assembly, homodimer. Pyridoxal 5'-phosphate is required as a cofactor.

It is found in the cytoplasm. It carries out the reaction (S)-4-amino-5-oxopentanoate = 5-aminolevulinate. It functions in the pathway porphyrin-containing compound metabolism; protoporphyrin-IX biosynthesis; 5-aminolevulinate from L-glutamyl-tRNA(Glu): step 2/2. It participates in porphyrin-containing compound metabolism; chlorophyll biosynthesis. This chain is Glutamate-1-semialdehyde 2,1-aminomutase, found in Chlorobium limicola (strain DSM 245 / NBRC 103803 / 6330).